The sequence spans 471 residues: Alpha-galactosidase (471 aa).

The signal sequence occupies residues 1 to 18 (MSYIYLFITAAAVTGALG). C42 and C74 are joined by a disulfide. D72 and D73 together coordinate substrate. Residue N82 is glycosylated (N-linked (GlcNAc...) asparagine). C121 and C151 are oxidised to a cystine. K147 is a substrate binding site. D149 acts as the Nucleophile in catalysis. The N-linked (GlcNAc...) asparagine glycan is linked to N175. Substrate is bound at residue R205. Catalysis depends on D209, which acts as the Proton donor. Disulfide bonds link C221–C237 and C223–C230. Q251 serves as a coordination point for substrate. 7 N-linked (GlcNAc...) asparagine glycosylation sites follow: N270, N361, N370, N417, N422, N435, and N454.

The protein belongs to the glycosyl hydrolase 27 family. In terms of assembly, homotetramer.

The protein localises to the secreted. It carries out the reaction Hydrolysis of terminal, non-reducing alpha-D-galactose residues in alpha-D-galactosides, including galactose oligosaccharides, galactomannans and galactolipids.. The polypeptide is Alpha-galactosidase (MEL) (Saccharomyces mikatae (Yeast)).